The sequence spans 213 residues: Nucleoside triphosphate pyrophosphatase (213 aa).

Catalysis depends on aspartate 79, which acts as the Proton acceptor.

The protein belongs to the Maf family. A divalent metal cation is required as a cofactor.

Its subcellular location is the cytoplasm. It carries out the reaction a ribonucleoside 5'-triphosphate + H2O = a ribonucleoside 5'-phosphate + diphosphate + H(+). It catalyses the reaction a 2'-deoxyribonucleoside 5'-triphosphate + H2O = a 2'-deoxyribonucleoside 5'-phosphate + diphosphate + H(+). Nucleoside triphosphate pyrophosphatase. May have a dual role in cell division arrest and in preventing the incorporation of modified nucleotides into cellular nucleic acids. The protein is Nucleoside triphosphate pyrophosphatase of Rhodococcus erythropolis (strain PR4 / NBRC 100887).